Here is a 284-residue protein sequence, read N- to C-terminus: RNase adapter protein RapZ (284 aa).

8–15 (GRSGSGKS) contributes to the ATP binding site. GTP is bound at residue 56–59 (DVRN). The RNA-binding stretch occupies residues 266–284 (RSRGKNVQSRHRTLEKRKT).

The protein belongs to the RapZ-like family. RapZ subfamily. As to quaternary structure, homotrimer.

In terms of biological role, modulates the synthesis of GlmS, by affecting the processing and stability of the regulatory small RNA GlmZ. When glucosamine-6-phosphate (GlcN6P) concentrations are high in the cell, RapZ binds GlmZ and targets it to cleavage by RNase E. Consequently, GlmZ is inactivated and unable to activate GlmS synthesis. Under low GlcN6P concentrations, RapZ is sequestered and inactivated by an other regulatory small RNA, GlmY, preventing GlmZ degradation and leading to synthesis of GlmS. This chain is RNase adapter protein RapZ, found in Salmonella arizonae (strain ATCC BAA-731 / CDC346-86 / RSK2980).